Reading from the N-terminus, the 299-residue chain is ATP synthase gamma chain (299 aa).

This sequence belongs to the ATPase gamma chain family. In terms of assembly, F-type ATPases have 2 components, CF(1) - the catalytic core - and CF(0) - the membrane proton channel. CF(1) has five subunits: alpha(3), beta(3), gamma(1), delta(1), epsilon(1). CF(0) has three main subunits: a, b and c.

The protein resides in the cell inner membrane. Produces ATP from ADP in the presence of a proton gradient across the membrane. The gamma chain is believed to be important in regulating ATPase activity and the flow of protons through the CF(0) complex. The sequence is that of ATP synthase gamma chain from Rhodospirillum rubrum.